We begin with the raw amino-acid sequence, 354 residues long: tRNA N6-adenosine threonylcarbamoyltransferase (354 aa).

His111 and His115 together coordinate Fe cation. Residues 134-138 (LVSGG), Asp167, Gly180, and Asn279 contribute to the substrate site. Asp319 is a binding site for Fe cation.

The protein belongs to the KAE1 / TsaD family. Requires Fe(2+) as cofactor.

It localises to the cytoplasm. It catalyses the reaction L-threonylcarbamoyladenylate + adenosine(37) in tRNA = N(6)-L-threonylcarbamoyladenosine(37) in tRNA + AMP + H(+). In terms of biological role, required for the formation of a threonylcarbamoyl group on adenosine at position 37 (t(6)A37) in tRNAs that read codons beginning with adenine. Is involved in the transfer of the threonylcarbamoyl moiety of threonylcarbamoyl-AMP (TC-AMP) to the N6 group of A37, together with TsaE and TsaB. TsaD likely plays a direct catalytic role in this reaction. In Neisseria meningitidis serogroup A / serotype 4A (strain DSM 15465 / Z2491), this protein is tRNA N6-adenosine threonylcarbamoyltransferase.